The following is a 297-amino-acid chain: Protoheme IX farnesyltransferase (297 aa).

The next 9 helical transmembrane spans lie at Pro12 to Gly32, Tyr36 to Phe56, Val85 to Ala105, Leu108 to Met128, Val133 to Ala153, Leu163 to Phe183, Ile209 to Ala229, Gly230 to Gln250, and Phe266 to Val286.

This sequence belongs to the UbiA prenyltransferase family. Protoheme IX farnesyltransferase subfamily.

It localises to the cell inner membrane. It catalyses the reaction heme b + (2E,6E)-farnesyl diphosphate + H2O = Fe(II)-heme o + diphosphate. It functions in the pathway porphyrin-containing compound metabolism; heme O biosynthesis; heme O from protoheme: step 1/1. Functionally, converts heme B (protoheme IX) to heme O by substitution of the vinyl group on carbon 2 of heme B porphyrin ring with a hydroxyethyl farnesyl side group. This Sodalis glossinidius (strain morsitans) protein is Protoheme IX farnesyltransferase.